The primary structure comprises 152 residues: UPF0311 protein blr7842 (152 aa).

The protein belongs to the UPF0311 family.

In Bradyrhizobium diazoefficiens (strain JCM 10833 / BCRC 13528 / IAM 13628 / NBRC 14792 / USDA 110), this protein is UPF0311 protein blr7842.